An 859-amino-acid chain; its full sequence is Autoinducer 2 sensor kinase/phosphatase LuxQ (859 aa).

The next 2 helical transmembrane spans lie at 15-35 (ATLITKIIILVLAPIILGIFI) and 280-300 (IQHILAMLASIIGMIMIALMS). A Histidine kinase domain is found at 489–711 (KMSHEIRTPI…TFVITLPVKD (223 aa)). Histidine 492 carries the post-translational modification Phosphohistidine; by autocatalysis. The region spanning 736–851 (KVLLVEDNHT…ALHEAFVDFK (116 aa)) is the Response regulatory domain. Aspartate 785 carries the post-translational modification 4-aspartylphosphate.

In terms of assembly, binds the complex formed by AI-2 and LuxP.

It localises to the cell inner membrane. It carries out the reaction ATP + protein L-histidine = ADP + protein N-phospho-L-histidine.. Its function is as follows. At low cell density, in absence of AI-2 (autoinducer 2), LuxQ has a kinase activity and autophosphorylates on a histidine residue. The phosphoryl group is then transferred to an aspartate residue in the response regulator domain. The phosphoryl group is transferred to LuxU, and ultimately to LuxO. At high cell density, in the presence of AI-2, the kinase activity is inactivated, and the response regulator domain has a phosphatase activity. The polypeptide is Autoinducer 2 sensor kinase/phosphatase LuxQ (luxQ) (Vibrio harveyi (Beneckea harveyi)).